Consider the following 105-residue polypeptide: Putative pterin-4-alpha-carbinolamine dehydratase (105 aa).

Belongs to the pterin-4-alpha-carbinolamine dehydratase family.

It carries out the reaction (4aS,6R)-4a-hydroxy-L-erythro-5,6,7,8-tetrahydrobiopterin = (6R)-L-erythro-6,7-dihydrobiopterin + H2O. In Sinorhizobium medicae (strain WSM419) (Ensifer medicae), this protein is Putative pterin-4-alpha-carbinolamine dehydratase.